A 196-amino-acid chain; its full sequence is Crossover junction endodeoxyribonuclease RuvC (196 aa).

Catalysis depends on residues Asp-19, Glu-80, and Asp-153. Residues Asp-19, Glu-80, and Asp-153 each coordinate Mg(2+).

The protein belongs to the RuvC family. In terms of assembly, homodimer which binds Holliday junction (HJ) DNA. The HJ becomes 2-fold symmetrical on binding to RuvC with unstacked arms; it has a different conformation from HJ DNA in complex with RuvA. In the full resolvosome a probable DNA-RuvA(4)-RuvB(12)-RuvC(2) complex forms which resolves the HJ. Mg(2+) is required as a cofactor.

The protein localises to the cytoplasm. The catalysed reaction is Endonucleolytic cleavage at a junction such as a reciprocal single-stranded crossover between two homologous DNA duplexes (Holliday junction).. In terms of biological role, the RuvA-RuvB-RuvC complex processes Holliday junction (HJ) DNA during genetic recombination and DNA repair. Endonuclease that resolves HJ intermediates. Cleaves cruciform DNA by making single-stranded nicks across the HJ at symmetrical positions within the homologous arms, yielding a 5'-phosphate and a 3'-hydroxyl group; requires a central core of homology in the junction. The consensus cleavage sequence is 5'-(A/T)TT(C/G)-3'. Cleavage occurs on the 3'-side of the TT dinucleotide at the point of strand exchange. HJ branch migration catalyzed by RuvA-RuvB allows RuvC to scan DNA until it finds its consensus sequence, where it cleaves and resolves the cruciform DNA. The polypeptide is Crossover junction endodeoxyribonuclease RuvC (Cutibacterium acnes (strain DSM 16379 / KPA171202) (Propionibacterium acnes)).